A 274-amino-acid polypeptide reads, in one-letter code: Diaminopimelate epimerase (274 aa).

Substrate-binding residues include Asn11, Gln44, and Asn64. The active-site Proton donor is the Cys73. Substrate is bound by residues 74–75 (GN), Asn157, Asn190, and 208–209 (ER). Residue Cys217 is the Proton acceptor of the active site. Residue 218–219 (GS) coordinates substrate.

It belongs to the diaminopimelate epimerase family. As to quaternary structure, homodimer.

Its subcellular location is the cytoplasm. The catalysed reaction is (2S,6S)-2,6-diaminopimelate = meso-2,6-diaminopimelate. It functions in the pathway amino-acid biosynthesis; L-lysine biosynthesis via DAP pathway; DL-2,6-diaminopimelate from LL-2,6-diaminopimelate: step 1/1. Functionally, catalyzes the stereoinversion of LL-2,6-diaminopimelate (L,L-DAP) to meso-diaminopimelate (meso-DAP), a precursor of L-lysine and an essential component of the bacterial peptidoglycan. This is Diaminopimelate epimerase from Actinobacillus pleuropneumoniae serotype 7 (strain AP76).